A 449-amino-acid chain; its full sequence is Cyclin-B1-1 (449 aa).

Disordered stretches follow at residues 1 to 34 (MATR…VAGR) and 90 to 143 (AVAP…SVRK). Low complexity-rich tracts occupy residues 90-102 (AVAP…PAQR) and 121-134 (EISS…RQQS).

This sequence belongs to the cyclin family. Cyclin AB subfamily.

This chain is Cyclin-B1-1 (CYCB1-1), found in Oryza sativa subsp. japonica (Rice).